A 54-amino-acid polypeptide reads, in one-letter code: uncharacterized protein (54 aa).

Positions 1–28 (MDRKKDEIQRKYREQMREKKEREKEDGS) are enriched in basic and acidic residues. The disordered stretch occupies residues 1-29 (MDRKKDEIQRKYREQMREKKEREKEDGSS). The helical transmembrane segment at 31 to 51 (TFEIVVVLAIIILMFFFNSVF) threads the bilayer.

Its subcellular location is the cell membrane. This is an uncharacterized protein from Bacillus subtilis (strain 168).